The chain runs to 498 residues: Guanosine-5'-triphosphate,3'-diphosphate pyrophosphatase (498 aa).

The protein belongs to the GppA/Ppx family. GppA subfamily.

The enzyme catalyses guanosine 3'-diphosphate 5'-triphosphate + H2O = guanosine 3',5'-bis(diphosphate) + phosphate + H(+). The protein operates within purine metabolism; ppGpp biosynthesis; ppGpp from GTP: step 2/2. Functionally, catalyzes the conversion of pppGpp to ppGpp. Guanosine pentaphosphate (pppGpp) is a cytoplasmic signaling molecule which together with ppGpp controls the 'stringent response', an adaptive process that allows bacteria to respond to amino acid starvation, resulting in the coordinated regulation of numerous cellular activities. The chain is Guanosine-5'-triphosphate,3'-diphosphate pyrophosphatase from Yersinia enterocolitica serotype O:8 / biotype 1B (strain NCTC 13174 / 8081).